Here is a 513-residue protein sequence, read N- to C-terminus: Putative thymidine phosphorylase 2 (513 aa).

The protein belongs to the thymidine/pyrimidine-nucleoside phosphorylase family. Type 2 subfamily.

It carries out the reaction thymidine + phosphate = 2-deoxy-alpha-D-ribose 1-phosphate + thymine. This chain is Putative thymidine phosphorylase 2, found in Acidovorax sp. (strain JS42).